The following is a 372-amino-acid chain: Transcription factor MYB80 (372 aa).

HTH myb-type domains are found at residues 9-65 and 66-116; these read KDNV…RPDL and KHGE…KKKL. DNA-binding regions (H-T-H motif) lie at residues 37-61 and 89-112; these read WRLIPKNAGLQRCGKSCRLRWTNYL and WSVIAAQLPGRTDNDVKNHWNTKL. A compositionally biased stretch (polar residues) spans 298-311; the sequence is MWSHQSLYSGSSGT. The disordered stretch occupies residues 298–347; the sequence is MWSHQSLYSGSSGTEEARRELPEKGNDSVGSSGGDDDAADDGKDSGKGAA. Residues 312–323 are compositionally biased toward basic and acidic residues; that stretch reads EEARRELPEKGN.

The protein resides in the nucleus. Functionally, essential for tapetum development in anthers and microsporogenesis. May regulate the timing of tapetal programmed cell death (PCD) which is critical for pollen development. In Oryza sativa subsp. japonica (Rice), this protein is Transcription factor MYB80.